Reading from the N-terminus, the 224-residue chain is Octanoyltransferase (224 aa).

One can recognise a BPL/LPL catalytic domain in the interval 29–224 (EATPDALWIC…GQKLATYLAP (196 aa)). Residues 68–75 (RGGQVTFH), 157–159 (ALG), and 170–172 (GVA) each bind substrate. Cys-188 serves as the catalytic Acyl-thioester intermediate.

Belongs to the LipB family.

Its subcellular location is the cytoplasm. It catalyses the reaction octanoyl-[ACP] + L-lysyl-[protein] = N(6)-octanoyl-L-lysyl-[protein] + holo-[ACP] + H(+). It participates in protein modification; protein lipoylation via endogenous pathway; protein N(6)-(lipoyl)lysine from octanoyl-[acyl-carrier-protein]: step 1/2. Functionally, catalyzes the transfer of endogenously produced octanoic acid from octanoyl-acyl-carrier-protein onto the lipoyl domains of lipoate-dependent enzymes. Lipoyl-ACP can also act as a substrate although octanoyl-ACP is likely to be the physiological substrate. This is Octanoyltransferase from Polaromonas naphthalenivorans (strain CJ2).